Consider the following 133-residue polypeptide: Holo-[acyl-carrier-protein] synthase (133 aa).

2 residues coordinate Mg(2+): Asp8 and Glu58.

Belongs to the P-Pant transferase superfamily. AcpS family. It depends on Mg(2+) as a cofactor.

It localises to the cytoplasm. It carries out the reaction apo-[ACP] + CoA = holo-[ACP] + adenosine 3',5'-bisphosphate + H(+). Functionally, transfers the 4'-phosphopantetheine moiety from coenzyme A to a Ser of acyl-carrier-protein. This is Holo-[acyl-carrier-protein] synthase from Erythrobacter litoralis (strain HTCC2594).